The primary structure comprises 207 residues: Oligoribonuclease (207 aa).

The Exonuclease domain maps to Leu-8 to Leu-172. Residue Tyr-129 is part of the active site.

This sequence belongs to the oligoribonuclease family.

The protein resides in the cytoplasm. 3'-to-5' exoribonuclease specific for small oligoribonucleotides. The chain is Oligoribonuclease from Leifsonia xyli subsp. xyli (strain CTCB07).